A 424-amino-acid chain; its full sequence is Myb family transcription factor RLI1 (424 aa).

The interval 144–165 is disordered; it reads RPQKRDSGERTPLPPPSQQQHQ. The HTH myb-type domain occupies 238-298; that stretch reads APSKTRIRWT…HLQKYRIAKY (61 aa). The H-T-H motif DNA-binding region spans 269–294; the sequence is PKGILKLMNSDGLTIYHIKSHLQKYR. The LHEQLE motif lies at 342–347; sequence LHEQLE. The stretch at 342–391 forms a coiled coil; the sequence is LHEQLEIQRNLQLRIEEQGKRLQKMFEDQLKASRSVMEPQELDDVVAFAA.

This sequence belongs to the MYB-CC family. As to quaternary structure, homodimer. Interacts with PHR2 in the nucleus. Interacts with SPX1 and SPX2 in the nucleus; these interactions prevent binding to the promoters of target genes, thus regulating negatively leaf inclination in response to phosphate (Pi) starvation.

The protein localises to the nucleus. Functionally, transcription factor binding to specific DNA sequences of target genes promoters, such as the motif R1BS 5'-NAKATNCN-3' and the motif P1BS 5'-GNATATNC-3' to trigger their expression. Nitrate-induced component involved in modulating phosphate (Pi) response and homeostasis together with PHR2; activates directly the expression of Pi starvation-induced (PSI) genes upon nitrate disponibility, thus triggering the nitrate-induced phosphate response (NIPR) promoting Pi uptake activity. Involved in the shoot architecture; positively regulates leaf inclination by affecting lamina joint cell elongation via the direct promotion of ILI4/BU1 and BC1 genes expression, especially in response to phosphate (Pi) availability. Regulates both brassinolide (BL) biosynthesis and signaling by directly activating BL-biosynthesis and signaling genes. This chain is Myb family transcription factor RLI1, found in Oryza sativa subsp. indica (Rice).